The following is a 379-amino-acid chain: Homoserine O-succinyltransferase (379 aa).

Positions 48 to 357 (NAVLICHALS…SAHGHDAFLM (310 aa)) constitute an AB hydrolase-1 domain. Catalysis depends on Ser154, which acts as the Nucleophile. Arg224 lines the substrate pocket. Active-site residues include Asp319 and His352. Asp353 contributes to the substrate binding site.

This sequence belongs to the AB hydrolase superfamily. MetX family. Homodimer.

The protein resides in the cytoplasm. It catalyses the reaction L-homoserine + succinyl-CoA = O-succinyl-L-homoserine + CoA. It functions in the pathway amino-acid biosynthesis; L-methionine biosynthesis via de novo pathway; O-succinyl-L-homoserine from L-homoserine: step 1/1. In terms of biological role, transfers a succinyl group from succinyl-CoA to L-homoserine, forming succinyl-L-homoserine. In Neisseria meningitidis serogroup B (strain ATCC BAA-335 / MC58), this protein is Homoserine O-succinyltransferase.